Here is a 169-residue protein sequence, read N- to C-terminus: MPLLDSFKVDHTRMNAPAVRVAKTMTTPKGDTITVFDLRFCRPNIDILPVRGIHTMEHLFAGFMRDHLNSESVEIIDISPMGCRTGFYMSLIGAPSEADVVSAWTKSMEDALNKVPDVSKIPELNEYQCGSYKEHSLEEAHQIARDVLAKGIGVNRNEDLALDEKLLNP.

Fe cation contacts are provided by histidine 54, histidine 58, and cysteine 129.

The protein belongs to the LuxS family. In terms of assembly, homodimer. Requires Fe cation as cofactor.

It catalyses the reaction S-(5-deoxy-D-ribos-5-yl)-L-homocysteine = (S)-4,5-dihydroxypentane-2,3-dione + L-homocysteine. Functionally, involved in the synthesis of autoinducer 2 (AI-2) which is secreted by bacteria and is used to communicate both the cell density and the metabolic potential of the environment. The regulation of gene expression in response to changes in cell density is called quorum sensing. Catalyzes the transformation of S-ribosylhomocysteine (RHC) to homocysteine (HC) and 4,5-dihydroxy-2,3-pentadione (DPD). The sequence is that of S-ribosylhomocysteine lyase from Actinobacillus pleuropneumoniae serotype 5b (strain L20).